The chain runs to 275 residues: Large ribosomal subunit protein uL2c (275 aa).

Residues 223 to 255 (VVMNPVDHPHGGGEGRAPIGRSRPVTPWGRPAL) are disordered.

Belongs to the universal ribosomal protein uL2 family. As to quaternary structure, part of the 50S ribosomal subunit.

It is found in the plastid. It localises to the chloroplast. The sequence is that of Large ribosomal subunit protein uL2c (rpl2) from Pleurastrum terricola (Filamentous green alga).